We begin with the raw amino-acid sequence, 56 residues long: Large ribosomal subunit protein bL32 (56 aa).

Residues 1–20 (MAVPKRRTSRSNTRSRRSQW) are compositionally biased toward basic residues. The tract at residues 1–24 (MAVPKRRTSRSNTRSRRSQWKAKV) is disordered.

Belongs to the bacterial ribosomal protein bL32 family.

The chain is Large ribosomal subunit protein bL32 from Frankia casuarinae (strain DSM 45818 / CECT 9043 / HFP020203 / CcI3).